We begin with the raw amino-acid sequence, 256 residues long: MVKSHIGSWILVLFVAMWSDVGLCKKRPKPGGGWNTGGSRYPGQGSPGGNRYPPQGGGGWGQPHGGGWGQPHGGGWGQPHGGGWGQPHGGGGWGQGGSHSQWNKPSKPKTNMKHVAGAAAAGAVVGGLGGYMLGSAMSRPLIHFGNDYEDRYYRENMYRYPNQVYYRPVDRYSNQNNFVHDCVNITVKQHTVTTTTKGENFTETDIKIMERVVEQMCITQYQRESQAYYQRGASVILFSSPPVILLISFLIFLIVG.

The first 24 residues, 1–24 (MVKSHIGSWILVLFVAMWSDVGLC), serve as a signal peptide directing secretion. An interaction with GRB2, ERI3 and SYN1 region spans residues 25–233 (KKRPKPGGGW…ESQAYYQRGA (209 aa)). The tract at residues 28 to 110 (PKPGGGWNTG…QWNKPSKPKT (83 aa)) is disordered. 5 tandem repeats follow at residues 54–62 (PQGGGGWGQ), 63–70 (PHGGGWGQ), 71–78 (PHGGGWGQ), 79–86 (PHGGGWGQ), and 87–95 (PHGGGGWGQ). The tract at residues 54 to 95 (PQGGGGWGQPHGGGWGQPHGGGWGQPHGGGWGQPHGGGGWGQ) is 5 X 8 AA tandem repeats of P-H-G-G-G-W-G-Q. Over residues 55–97 (QGGGGWGQPHGGGWGQPHGGGWGQPHGGGWGQPHGGGGWGQGG) the composition is skewed to gly residues. 12 residues coordinate Cu(2+): His-64, Gly-65, Gly-66, His-72, Gly-73, Gly-74, His-80, Gly-81, Gly-82, His-88, Gly-90, and Gly-91. Cysteines 182 and 217 form a disulfide. N-linked (GlcNAc...) (complex) asparagine glycosylation is found at Asn-184 and Asn-200. Ala-233 carries GPI-anchor amidated alanine lipidation. Positions 234–256 (SVILFSSPPVILLISFLIFLIVG) are cleaved as a propeptide — removed in mature form.

The protein belongs to the prion family. In terms of assembly, monomer and homodimer. Has a tendency to aggregate into amyloid fibrils containing a cross-beta spine, formed by a steric zipper of superposed beta-strands. Soluble oligomers may represent an intermediate stage on the path to fibril formation. Copper binding may promote oligomerization. Interacts with GRB2, APP, ERI3/PRNPIP and SYN1. Mislocalized cytosolically exposed PrP interacts with MGRN1; this interaction alters MGRN1 subcellular location and causes lysosomal enlargement. Interacts with KIAA1191.

It is found in the cell membrane. The protein resides in the golgi apparatus. Functionally, its primary physiological function is unclear. Has cytoprotective activity against internal or environmental stresses. May play a role in neuronal development and synaptic plasticity. May be required for neuronal myelin sheath maintenance. May play a role in iron uptake and iron homeostasis. Soluble oligomers are toxic to cultured neuroblastoma cells and induce apoptosis (in vitro). Association with GPC1 (via its heparan sulfate chains) targets PRNP to lipid rafts. Also provides Cu(2+) or Zn(2+) for the ascorbate-mediated GPC1 deaminase degradation of its heparan sulfate side chains. The sequence is that of Major prion protein (PRNP) from Ovis aries (Sheep).